A 304-amino-acid polypeptide reads, in one-letter code: MDSLTNLATTEGRNPASEELDQLPTLDVLRLMNDEDHRVPDAIASQLPAIAAVVEAAVKGLSAGGRLIYAGAGTSGRLGVLDAAECPPTFSTNPTMVVGLIAGGQQAMFQAVEGAEDDADRGAEELNVLQPGPHDVVVGLAASGRTPWVVGVVRAAKRAGAVTASVCCNHRAVISSEVDLPVEIDAGPEVLTGSTRLKAGTVQKLVLNMISTATMVGLGKTYGNLMVDVSPSNEKLRQRAMSIVMAATGCSCDDAITALHEAGGHAKTAIVMVLLGMTATQARARLAEVGGVVRVAVDENHLRL.

The region spanning 57-220 (AVKGLSAGGR…STATMVGLGK (164 aa)) is the SIS domain. The Proton donor role is filled by Glu85. Glu116 is an active-site residue.

It belongs to the GCKR-like family. MurNAc-6-P etherase subfamily. Homodimer.

It catalyses the reaction N-acetyl-D-muramate 6-phosphate + H2O = N-acetyl-D-glucosamine 6-phosphate + (R)-lactate. It participates in amino-sugar metabolism; N-acetylmuramate degradation. Specifically catalyzes the cleavage of the D-lactyl ether substituent of MurNAc 6-phosphate, producing GlcNAc 6-phosphate and D-lactate. The polypeptide is N-acetylmuramic acid 6-phosphate etherase (Cutibacterium acnes (strain DSM 16379 / KPA171202) (Propionibacterium acnes)).